A 240-amino-acid chain; its full sequence is uncharacterized protein (240 aa).

Residues 197–210 (PLKSHSASRLNHLT) show a composition bias toward polar residues. Residues 197 to 222 (PLKSHSASRLNHLTPSPRPGETPLEN) form a disordered region.

This is an uncharacterized protein from Caenorhabditis elegans.